A 99-amino-acid polypeptide reads, in one-letter code: Putative RNA-binding protein RbpE (99 aa).

One can recognise an RRM domain in the interval 2–79 (SIYVGNLSYS…RVLKVNKARP (78 aa)). The interval 78 to 99 (RPREEKGARSGGGSWSRNNGGY) is disordered. Positions 86–99 (RSGGGSWSRNNGGY) are enriched in gly residues.

The chain is Putative RNA-binding protein RbpE (rbpE) from Nostoc sp. (strain PCC 7120 / SAG 25.82 / UTEX 2576).